The primary structure comprises 432 residues: Maltoporin (432 aa).

A signal peptide spans 1 to 22; sequence MKKVSVIAAAVAATLAAGSAFA.

The protein belongs to the porin LamB (TC 1.B.3) family. In terms of assembly, homotrimer formed of three 18-stranded antiparallel beta-barrels, containing three independent channels.

It localises to the cell outer membrane. The catalysed reaction is beta-maltose(in) = beta-maltose(out). In terms of biological role, involved in the transport of maltose and maltodextrins. The protein is Maltoporin of Vibrio parahaemolyticus serotype O3:K6 (strain RIMD 2210633).